The sequence spans 324 residues: ATP synthase mitochondrial F1 complex assembly factor 1 (324 aa).

A mitochondrion-targeting transit peptide spans 1–54 (MAAVVSAAGGACPAVLQVAGLYRGLCAVRSRALGLGFVSPAQLRVFPVRRGSGL).

This sequence belongs to the ATP11 family. In terms of assembly, interacts with ATP5F1B; involved in the assembly of the F1 component of the mitochondrial ATP synthase (ATPase). As to expression, widely expressed but with low level.

The protein localises to the mitochondrion inner membrane. In terms of biological role, has a complex stabilizing activity in the assembly of the mitochondrial F1-F0 complex. The protein is ATP synthase mitochondrial F1 complex assembly factor 1 of Mus musculus (Mouse).